We begin with the raw amino-acid sequence, 405 residues long: Deoxyguanosinetriphosphate triphosphohydrolase-like protein (405 aa).

The HD domain maps to 75-219 (RLTHTIEVAQ…AAIADDIAYN (145 aa)).

This sequence belongs to the dGTPase family. Type 2 subfamily.

This chain is Deoxyguanosinetriphosphate triphosphohydrolase-like protein, found in Sinorhizobium medicae (strain WSM419) (Ensifer medicae).